Here is a 491-residue protein sequence, read N- to C-terminus: MATFKDACYHYRRLNKLNNLVLKLGANDEWRPAPVTKYKGWCLDCCQHTNLTYCRGCALYHVCQWCSQYNRCFLDEEPHLLRMRTFKNVMTKEDIEGLLTMYETLFPINEKLVNKFTDFVKQRKCRNEYLLEWYNHLLMPITLQALTVKLEDNIYYICGYYDCMEHENQTPLQFINLLEKYDKLLLDDRNFNRMSYLPTILQQEYALRYFSKSRFFSKKEKRLSRNDFSDNLMEDRHSPISLIQVIRNCISTHMNDSEWNKACTLVVDPKNYIDIINSSYTEHYSVSQRCKLFTKYKLGIVSKLVRPNYIFSSHESCALNVHNCKWCQTNNHYKVWADFRLKKIYNNMMDFVRALTKSNGNVGHCSSQESESKCIPDIFLICEMEKWNGPVRVLFRYLEPVDINGEEYVLLDYEVNWEVRGLIIQNMDGRVPRILNMDDVKKILSAIIFDWFDVRYMRETPLTTLTTNQLRALNRKNELIDEYDLELSDVE.

The segment at 1-81 (MATFKDACYH…CFLDEEPHLL (81 aa)) is RNA-binding. Residues 42 to 79 (CLDCCQHTNLTYCRGCALYHVCQWCSQYNRCFLDEEPH) are zinc-binding domain. Positions 82 to 176 (RMRTFKNVMT…ENQTPLQFIN (95 aa)) are important for cytoskeleton localization. An interaction with host IRF3 region spans residues 320–491 (NVHNCKWCQT…EYDLELSDVE (172 aa)). The pLxIS motif motif lies at 485–488 (LELS).

The protein belongs to the rotavirus NSP1 family. Interacts (via C-terminus) with host IRF3; this interaction leads to IRF3 degradation. Interacts with host IRF7; this interaction leads to IRF7 degradation. Interacts with host CUL1 and CUL3.

It is found in the host cytoplasm. It localises to the host cytoskeleton. Its function is as follows. Plays a role in the inhibition of host innate immunity by inducing the degradation of key host factors required to activate interferon production such as IRF3, IRF5 or IRF7. Associates with components of cullin RING ligases (CRLs) including CUL1 or CUL3, which are essential multisubunit ubiquitination complexes, to modulate their activities. The sequence is that of Non-structural protein 1 from Rotavirus A (strain RVA/Human/Japan/AU-1/1982/G3P3[9]) (RV-A).